The sequence spans 148 residues: Large ribosomal subunit protein bL9 (148 aa).

Belongs to the bacterial ribosomal protein bL9 family.

Binds to the 23S rRNA. The sequence is that of Large ribosomal subunit protein bL9 from Pseudomonas syringae pv. tomato (strain ATCC BAA-871 / DC3000).